The primary structure comprises 197 residues: Adenylate kinase (197 aa).

Residue 16–21 participates in ATP binding; it reads GAGKGT. Residues 36-65 are NMP; sequence STGDILRDHVARGTALGQRVKPILDAGQLV. Residues threonine 37, arginine 42, 63–65, 90–93, and glutamine 97 each bind AMP; these read QLV and GFPR. Residues 131–147 are LID; the sequence is ERGRQAALRGEPVRSDD. Arginine 132 contacts ATP. 2 residues coordinate AMP: arginine 144 and arginine 155. Residue glycine 183 coordinates ATP.

It belongs to the adenylate kinase family. Monomer.

The protein resides in the cytoplasm. The catalysed reaction is AMP + ATP = 2 ADP. It participates in purine metabolism; AMP biosynthesis via salvage pathway; AMP from ADP: step 1/1. In terms of biological role, catalyzes the reversible transfer of the terminal phosphate group between ATP and AMP. Plays an important role in cellular energy homeostasis and in adenine nucleotide metabolism. This is Adenylate kinase from Deinococcus geothermalis (strain DSM 11300 / CIP 105573 / AG-3a).